Reading from the N-terminus, the 324-residue chain is Probable UDP-sugar transporter protein SLC35A4 (324 aa).

Over 1-18 (MSVEDGGVPGLGRPRKAR) the chain is Cytoplasmic. A helical membrane pass occupies residues 19-39 (WTLMLLLSTAMYGAHAPLLAL). Topologically, residues 40–52 (CHVDGRVPFRPSS) are lumenal. The helical transmembrane segment at 53–73 (AVLLTELTKLLLCALSLLVGW) threads the bilayer. Residues 74 to 85 (QAWPQGTPPWRQ) lie on the Cytoplasmic side of the membrane. Residues 86–106 (AAPFALSALLYGANNNLVIYL) form a helical membrane-spanning segment. Residues 107 to 141 (QRYMDPSTYQVLSNLKIGSTALFYCLCLRHRLSAR) are Lumenal-facing. The helical transmembrane segment at 142–162 (QGLALLLLMAAGACYAAGGLQ) threads the bilayer. The Cytoplasmic segment spans residues 163 to 180 (DPGTTLPGPPSAAATSPM). The chain crosses the membrane as a helical span at residues 181-201 (PLHITPLGLLLLILYCLISGL). Residues 202 to 214 (SSVYTELLMKRQR) are Lumenal-facing. A helical transmembrane segment spans residues 215–235 (LPLALQNLFLYSFGVLLNLGL). Topologically, residues 236-248 (HAGGGPGPGLLEG) are cytoplasmic. Residues 249–271 (FSGWMALVVLSQALNGLLMSAVM) traverse the membrane as a helical segment. At 272–275 (KHGS) the chain is on the lumenal side. Residues 276 to 298 (SITRLFVVSCSLVVNAVLSAALL) form a helical membrane-spanning segment. The Cytoplasmic portion of the chain corresponds to 299–324 (RLQLTAAFFLATLLIGLAVRLYYGSR).

It belongs to the nucleotide-sugar transporter family. SLC35A subfamily. In terms of assembly, found in a complex with SLC35A2 and SLC35A3.

It localises to the golgi apparatus membrane. It catalyses the reaction CDP-L-ribitol(in) + CDP(out) = CDP-L-ribitol(out) + CDP(in). Functionally, mediates the transport of CDP-ribitol. Does not exhibit CMP-sialic acid, UDP-galactose and UDP-N-acetylglucosamine transport activity. The sequence is that of Probable UDP-sugar transporter protein SLC35A4 from Bos taurus (Bovine).